Consider the following 637-residue polypeptide: Threonine--tRNA ligase (637 aa).

Residues Met-1 to Thr-61 enclose the TGS domain. Residues Asp-242 to Pro-533 are catalytic. Zn(2+) contacts are provided by Cys-333, His-384, and His-510.

This sequence belongs to the class-II aminoacyl-tRNA synthetase family. As to quaternary structure, homodimer. Zn(2+) is required as a cofactor.

It localises to the cytoplasm. It carries out the reaction tRNA(Thr) + L-threonine + ATP = L-threonyl-tRNA(Thr) + AMP + diphosphate + H(+). In terms of biological role, catalyzes the attachment of threonine to tRNA(Thr) in a two-step reaction: L-threonine is first activated by ATP to form Thr-AMP and then transferred to the acceptor end of tRNA(Thr). Also edits incorrectly charged L-seryl-tRNA(Thr). This is Threonine--tRNA ligase from Teredinibacter turnerae (strain ATCC 39867 / T7901).